The following is a 156-amino-acid chain: MPRRRVVGQRKILPDPKFHSELLAKFINVIMQDGKKSTAEKIIYKALDVVAEKKSESHLTILEAALDNVRPSVEVKSRRVGGSTYQVPCEVRPVRRNALAMRWLVEAARKRGEKSMALRLAGEMLDASENKGTAVKKREDVHRMAEANKAFAHYRW.

This sequence belongs to the universal ribosomal protein uS7 family. As to quaternary structure, part of the 30S ribosomal subunit. Contacts proteins S9 and S11.

Functionally, one of the primary rRNA binding proteins, it binds directly to 16S rRNA where it nucleates assembly of the head domain of the 30S subunit. Is located at the subunit interface close to the decoding center, probably blocks exit of the E-site tRNA. This is Small ribosomal subunit protein uS7 from Shewanella baltica (strain OS223).